Consider the following 137-residue polypeptide: Probable 4-amino-4-deoxy-L-arabinose-phosphoundecaprenol flippase subunit ArnF (137 aa).

3 helical membrane passes run 43 to 63 (AIAVICASITAYALSMLFWLL), 74 to 94 (YSLLSISYALVYTLAATLPFF), and 98 to 118 (FTVSKTVGVTLIVAGVLTINL).

It belongs to the ArnF family. In terms of assembly, heterodimer of ArnE and ArnF.

Its subcellular location is the cell inner membrane. It participates in bacterial outer membrane biogenesis; lipopolysaccharide biosynthesis. In terms of biological role, translocates 4-amino-4-deoxy-L-arabinose-phosphoundecaprenol (alpha-L-Ara4N-phosphoundecaprenol) from the cytoplasmic to the periplasmic side of the inner membrane. In Pseudomonas savastanoi pv. phaseolicola (strain 1448A / Race 6) (Pseudomonas syringae pv. phaseolicola (strain 1448A / Race 6)), this protein is Probable 4-amino-4-deoxy-L-arabinose-phosphoundecaprenol flippase subunit ArnF.